The chain runs to 343 residues: Tetraacyldisaccharide 4'-kinase (343 aa).

An ATP-binding site is contributed by 47-54 (SVGGTGKT).

This sequence belongs to the LpxK family.

The catalysed reaction is a lipid A disaccharide + ATP = a lipid IVA + ADP + H(+). It functions in the pathway glycolipid biosynthesis; lipid IV(A) biosynthesis; lipid IV(A) from (3R)-3-hydroxytetradecanoyl-[acyl-carrier-protein] and UDP-N-acetyl-alpha-D-glucosamine: step 6/6. Its function is as follows. Transfers the gamma-phosphate of ATP to the 4'-position of a tetraacyldisaccharide 1-phosphate intermediate (termed DS-1-P) to form tetraacyldisaccharide 1,4'-bis-phosphate (lipid IVA). This Flavobacterium psychrophilum (strain ATCC 49511 / DSM 21280 / CIP 103535 / JIP02/86) protein is Tetraacyldisaccharide 4'-kinase.